The following is a 167-amino-acid chain: Large ribosomal subunit protein uL10 (167 aa).

It belongs to the universal ribosomal protein uL10 family. As to quaternary structure, part of the ribosomal stalk of the 50S ribosomal subunit. The N-terminus interacts with L11 and the large rRNA to form the base of the stalk. The C-terminus forms an elongated spine to which L12 dimers bind in a sequential fashion forming a multimeric L10(L12)X complex.

In terms of biological role, forms part of the ribosomal stalk, playing a central role in the interaction of the ribosome with GTP-bound translation factors. This is Large ribosomal subunit protein uL10 from Alkaliphilus oremlandii (strain OhILAs) (Clostridium oremlandii (strain OhILAs)).